A 292-amino-acid chain; its full sequence is uncharacterized protein (292 aa).

Residues 175-197 (VLNFYFTALPYAIDGIISGIGVF) traverse the membrane as a helical segment.

It localises to the membrane. This is an uncharacterized protein from Methanocaldococcus jannaschii (strain ATCC 43067 / DSM 2661 / JAL-1 / JCM 10045 / NBRC 100440) (Methanococcus jannaschii).